A 794-amino-acid polypeptide reads, in one-letter code: Phenylalanine--tRNA ligase beta subunit (794 aa).

Residues 39-148 form the tRNA-binding domain; that stretch reads APAFDNVVVA…SDAPVGQAIR (110 aa). The B5 domain maps to 399–474; the sequence is PVRKPVLLRT…RLYGYDNIPS (76 aa). Positions 452, 458, 461, and 462 each coordinate Mg(2+). Positions 700-793 constitute an FDX-ACB domain; sequence SKFPPVIRDL…FEQAFGAQLR (94 aa).

The protein belongs to the phenylalanyl-tRNA synthetase beta subunit family. Type 1 subfamily. In terms of assembly, tetramer of two alpha and two beta subunits. Mg(2+) serves as cofactor.

Its subcellular location is the cytoplasm. The catalysed reaction is tRNA(Phe) + L-phenylalanine + ATP = L-phenylalanyl-tRNA(Phe) + AMP + diphosphate + H(+). The chain is Phenylalanine--tRNA ligase beta subunit from Dechloromonas aromatica (strain RCB).